The sequence spans 826 residues: Ribosome-releasing factor 2, mitochondrial (826 aa).

A mitochondrion-targeting transit peptide spans 1 to 44 (MIVRNLLGKNRLCCLQPKLLLSTLSQRPQLQLSLQLLCRATRLY). A tr-type G domain is found at 53-340 (PKTRNIGIIA…GITNYLPSPL (288 aa)). GTP-binding positions include 62–69 (AHIDAGKT), 126–130 (DTPGH), and 180–183 (NKMD).

It belongs to the TRAFAC class translation factor GTPase superfamily. Classic translation factor GTPase family. EF-G/EF-2 subfamily.

The protein resides in the mitochondrion. In terms of biological role, mitochondrial GTPase that mediates the disassembly of ribosomes from messenger RNA at the termination of mitochondrial protein biosynthesis. Not involved in the GTP-dependent ribosomal translocation step during translation elongation. In Lodderomyces elongisporus (strain ATCC 11503 / CBS 2605 / JCM 1781 / NBRC 1676 / NRRL YB-4239) (Yeast), this protein is Ribosome-releasing factor 2, mitochondrial.